The chain runs to 143 residues: Sporulation-specific cell division protein SsgB (143 aa).

The protein belongs to the SsgA family. In terms of assembly, interacts with SsgA. Interacts with FtsZ (via N-terminus).

It localises to the cell septum. Involved in sporulation-specific cell division. Required for early stages of sporulation. Important in the process of growth cessation prior to sporulation-specific cell division. Recruits cell division protein FtsZ to the future septum sites and tethers the contractile ring structure (Z ring) to the cytoplasmic membrane during sporulation. Stimulates polymerization and filament length of FtsZ in vitro. The polypeptide is Sporulation-specific cell division protein SsgB (Salinispora tropica (strain ATCC BAA-916 / DSM 44818 / JCM 13857 / NBRC 105044 / CNB-440)).